We begin with the raw amino-acid sequence, 185 residues long: Inner membrane-spanning protein YciB (185 aa).

The next 5 helical transmembrane spans lie at Ile19–Trp39, Thr49–His69, Thr72–Thr92, Gly122–Phe142, and Phe150–Ile170.

This sequence belongs to the YciB family.

It is found in the cell inner membrane. In terms of biological role, plays a role in cell envelope biogenesis, maintenance of cell envelope integrity and membrane homeostasis. This Acidithiobacillus ferrooxidans (strain ATCC 23270 / DSM 14882 / CIP 104768 / NCIMB 8455) (Ferrobacillus ferrooxidans (strain ATCC 23270)) protein is Inner membrane-spanning protein YciB.